The sequence spans 474 residues: Coronin-1C (474 aa).

WD repeat units lie at residues 78 to 118 (GHTG…LTLS), 128 to 168 (GHSK…ALIN), 172 to 202 (MHSD…RVID), 215 to 249 (AHEG…ALWN), and 263 to 303 (DTSN…PYVH). A coiled-coil region spans residues 435-474 (VQNEAKLDEILKEIKSIKETICSQDERISKLEQQLAKMAA). Lys446 is subject to N6-acetyllysine.

Belongs to the WD repeat coronin family. Homotrimer. Binds F-actin. Interacts with RCC2. Interacts preferentially with nucleotide-free and GDP-bound RAC1. Interacts with VIM (via head domain). Interacts with MICAL2; this interaction recruits MICAL2 to the actin filaments. As to expression, detected in skeletal muscle (at protein level). Detected in fibroblasts (at protein level). Ubiquitous.

It localises to the cell membrane. The protein localises to the cell projection. It is found in the lamellipodium. Its subcellular location is the ruffle membrane. The protein resides in the cytoplasm. It localises to the cytoskeleton. The protein localises to the cell cortex. It is found in the endosome membrane. Plays a role in directed cell migration by regulating the activation and subcellular location of RAC1. Increases the presence of activated RAC1 at the leading edge of migrating cells. Required for normal organization of the cytoskeleton, including the actin cytoskeleton, microtubules and the vimentin intermediate filaments. Required for normal cell proliferation, cell migration, and normal formation of lamellipodia. Plays a role in endoplasmic reticulum-associated endosome fission: localizes to endosome membrane tubules and promotes recruitment of TMCC1, leading to recruitment of the endoplasmic reticulum to endosome tubules for fission. Endosome membrane fission of early and late endosomes is essential to separate regions destined for lysosomal degradation from carriers to be recycled to the plasma membrane. Required for normal distribution of mitochondria within cells. The polypeptide is Coronin-1C (Coro1c) (Mus musculus (Mouse)).